Here is a 120-residue protein sequence, read N- to C-terminus: uncharacterized protein (120 aa).

This is an uncharacterized protein from Mycobacterium tuberculosis (strain CDC 1551 / Oshkosh).